A 336-amino-acid polypeptide reads, in one-letter code: F420-dependent glucose-6-phosphate dehydrogenase (336 aa).

Residue aspartate 39 coordinates coenzyme F420-(gamma-Glu)n. Histidine 40 serves as the catalytic Proton donor. Residues threonine 76 and 107–108 (TG) each bind coenzyme F420-(gamma-Glu)n. Residue glutamate 109 is the Proton acceptor of the active site. Coenzyme F420-(gamma-Glu)n is bound by residues asparagine 112, 177–178 (GG), and 180–181 (QV). Threonine 195, lysine 198, lysine 259, and arginine 283 together coordinate substrate.

The protein belongs to the F420-dependent glucose-6-phosphate dehydrogenase family. In terms of assembly, homodimer.

It carries out the reaction oxidized coenzyme F420-(gamma-L-Glu)(n) + D-glucose 6-phosphate + H(+) = 6-phospho-D-glucono-1,5-lactone + reduced coenzyme F420-(gamma-L-Glu)(n). Its function is as follows. Catalyzes the coenzyme F420-dependent oxidation of glucose 6-phosphate (G6P) to 6-phosphogluconolactone. Appears to have a role in resistance to oxidative stress, via its consumption of G6P that serves as a source of reducing power to combat oxidative stress in mycobacteria. The chain is F420-dependent glucose-6-phosphate dehydrogenase from Mycolicibacterium gilvum (strain PYR-GCK) (Mycobacterium gilvum (strain PYR-GCK)).